The chain runs to 294 residues: Cytidine deaminase (294 aa).

CMP/dCMP-type deaminase domains follow at residues 48 to 168 (DEDA…FGPK) and 186 to 294 (LEGD…VLLG). Position 89–91 (89–91 (NME)) interacts with substrate. Residue H102 participates in Zn(2+) binding. E104 (proton donor) is an active-site residue. Residues C129 and C132 each coordinate Zn(2+).

Belongs to the cytidine and deoxycytidylate deaminase family. As to quaternary structure, homodimer. Zn(2+) serves as cofactor.

The catalysed reaction is cytidine + H2O + H(+) = uridine + NH4(+). The enzyme catalyses 2'-deoxycytidine + H2O + H(+) = 2'-deoxyuridine + NH4(+). Its function is as follows. This enzyme scavenges exogenous and endogenous cytidine and 2'-deoxycytidine for UMP synthesis. In Citrobacter koseri (strain ATCC BAA-895 / CDC 4225-83 / SGSC4696), this protein is Cytidine deaminase.